Consider the following 171-residue polypeptide: Peptide methionine sulfoxide reductase MsrA (171 aa).

Residue cysteine 13 is part of the active site.

The protein belongs to the MsrA Met sulfoxide reductase family.

It carries out the reaction L-methionyl-[protein] + [thioredoxin]-disulfide + H2O = L-methionyl-(S)-S-oxide-[protein] + [thioredoxin]-dithiol. The catalysed reaction is [thioredoxin]-disulfide + L-methionine + H2O = L-methionine (S)-S-oxide + [thioredoxin]-dithiol. Functionally, has an important function as a repair enzyme for proteins that have been inactivated by oxidation. Catalyzes the reversible oxidation-reduction of methionine sulfoxide in proteins to methionine. In Mycobacterium sp. (strain MCS), this protein is Peptide methionine sulfoxide reductase MsrA.